The chain runs to 574 residues: DNA polymerase alpha subunit B (574 aa).

This sequence belongs to the DNA polymerase alpha subunit B family. Component of the alpha DNA polymerase complex (also known as the alpha DNA polymerase-primase complex) consisting of four subunits: the catalytic subunit pol1, the accessory subunit spb70/pol12, and the primase complex subunits spp1/pri1 and spp2/pri2 respectively. Interacts with orc1. Interacts with orc2; the interaction occurs on the chromatin, is stable thoughout the cell cycle and is independent from spb70 role in the alpha DNA polymerase complex. Phosphorylated in a cell cycle-dependent manner.

It is found in the nucleus. Its subcellular location is the chromosome. Functionally, accessory subunit of the DNA polymerase alpha complex (also known as the alpha DNA polymerase-primase complex) which plays an essential role in the initiation of DNA synthesis. During the S phase of the cell cycle, the DNA polymerase alpha complex (composed of a catalytic subunit pol1, an accessory subunit spb70/pol12 and two primase subunits, the catalytic subunit spp1/pri1 and the regulatory subunit spp2/pri2) is recruited to DNA at the replicative forks. The primase subunit of the polymerase alpha complex initiates DNA synthesis by oligomerising short RNA primers on both leading and lagging strands. The protein is DNA polymerase alpha subunit B of Schizosaccharomyces pombe (strain 972 / ATCC 24843) (Fission yeast).